The chain runs to 448 residues: PRHLEPAGSNRSYVTTSTRTYSLGALRPSTSRSLYSSSPGGAYVTRSSAVRLRSSMPGVRLLQDSVDFSLADAINTEFKNTRTNEKVELQELNDRFADYIDKVRFLEQQNKILLAELEQLKGQGKSRLGDLYEEEMRELRRQVDQLTNDKARVEVERDNLAEDIIRLREKLQEEMLQREEAESTLQSFRQDVDNASLARLDLERKVESLQEEIAFLKKLHDEEIQELQAQIQEQHVQIDVDVSKPDLTAALRDVRQQYESVAAKNLQEAEEWYKSKFADLSEAANRNNDALRQAKQESNEYRRQVQSLTCEVDALKGTNESLERQMREMEENFALEAANYQDTIGRLQDEIQNMKEEMARHLREYQDLLNVKMALDIEIATYRKLLEGEESRISLPLPNFSSLNLRETNLESLPLVDTHSKRTLLIKTVETRDGQVINETSQHHDDLE.

The head stretch occupies residues 1–77; that stretch reads PRHLEPAGSN…FSLADAINTE (77 aa). At S9 the chain carries Phosphoserine. T16 carries an O-linked (GlcNAc) threonine glycan. S17 is modified (phosphoserine; by PKC; alternate). S17 is a glycosylation site (O-linked (GlcNAc) serine; alternate). A Phosphoserine; by CaMK2, PKA, PKC and ROCK2 modification is found at S22. 3 positions are modified to phosphoserine: S29, S31, and S33. Y35 carries the phosphotyrosine modification. Residue S37 is modified to Phosphoserine. Position 38 is a phosphoserine; by CDK5 and CDK1 (S38). Y43 carries the phosphotyrosine modification. Residue S48 is modified to Phosphoserine; by PKA and PKC. S54 is modified (phosphoserine; by AURKB and ROCK2). S55 bears the Phosphoserine mark. S65 is modified (phosphoserine; by CaMK2). S69 is modified (phosphoserine). A coil 1A region spans residues 78 to 113; sequence FKNTRTNEKVELQELNDRFADYIDKVRFLEQQNKIL. A coiled-coil region spans residues 78-113; sequence FKNTRTNEKVELQELNDRFADYIDKVRFLEQQNKIL. Residues 85-393 enclose the IF rod domain; sequence EKVELQELND…KLLEGEESRI (309 aa). Residue K86 forms a Glycyl lysine isopeptide (Lys-Gly) (interchain with G-Cter in SUMO2) linkage. Y99 carries the phosphotyrosine modification. Residues K102, K111, and K121 each carry the N6-acetyllysine; alternate modification. N6-succinyllysine; alternate is present on residues K102 and K111. Residues K102, K111, and K121 each participate in a glycyl lysine isopeptide (Lys-Gly) (interchain with G-Cter in SUMO2); alternate cross-link. A linker 1 region spans residues 114-135; sequence LAELEQLKGQGKSRLGDLYEEE. S126 is modified (phosphoserine). Residues 136–227 are a coiled coil; sequence MRELRRQVDQ…KLHDEEIQEL (92 aa). Residues 136-227 are coil 1B; the sequence is MRELRRQVDQ…KLHDEEIQEL (92 aa). K150 is modified (N6-acetyllysine). Position 170 is an N6-acetyllysine; alternate (K170). K170 bears the N6-succinyllysine; alternate mark. A Phosphoserine modification is found at S196. At K205 the chain carries N6-acetyllysine; alternate. K205 is covalently cross-linked (Glycyl lysine isopeptide (Lys-Gly) (interchain with G-Cter in SUMO2); alternate). S208 bears the Phosphoserine mark. An N6-acetyllysine modification is found at K217. Residues 228-250 are linker 12; that stretch reads QAQIQEQHVQIDVDVSKPDLTAA. A Glycyl lysine isopeptide (Lys-Gly) (interchain with G-Cter in SUMO2) cross-link involves residue K244. The segment at 251–389 is coil 2; it reads LRDVRQQYES…ATYRKLLEGE (139 aa). Position 276 is an N6-acetyllysine; alternate (K276). Position 276 is an N6-succinyllysine; alternate (K276). K276 is covalently cross-linked (Glycyl lysine isopeptide (Lys-Gly) (interchain with G-Cter in SUMO2); alternate). Position 281 is a phosphoserine (S281). A coiled-coil region spans residues 285-389; that stretch reads NRNNDALRQA…ATYRKLLEGE (105 aa). Residue K295 forms a Glycyl lysine isopeptide (Lys-Gly) (interchain with G-Cter in SUMO2) linkage. S307 is modified (phosphoserine). The short motif at 308-311 is the [IL]-x-C-x-x-[DE] motif element; the sequence is LTCE. N6-acetyllysine; alternate is present on K355. K355 participates in a covalent cross-link: Glycyl lysine isopeptide (Lys-Gly) (interchain with G-Cter in SUMO2); alternate. The segment at 390–448 is tail; that stretch reads ESRISLPLPNFSSLNLRETNLESLPLVDTHSKRTLLIKTVETRDGQVINETSQHHDDLE. Phosphoserine occurs at positions 391, 394, 401, and 402. A Phosphothreonine modification is found at T408. S412 is modified (phosphoserine). Residue T418 is modified to Phosphothreonine. At S420 the chain carries Phosphoserine. K421 participates in a covalent cross-link: Glycyl lysine isopeptide (Lys-Gly) (interchain with G-Cter in SUMO2). The residue at position 427 (K427) is an N6-acetyllysine; alternate. K427 bears the N6-succinyllysine; alternate mark. K427 participates in a covalent cross-link: Glycyl lysine isopeptide (Lys-Gly) (interchain with G-Cter in SUMO2); alternate. A Glycyl lysine isopeptide (Lys-Gly) (interchain with G-Cter in SUMO1); alternate cross-link involves residue K427. 2 positions are modified to phosphothreonine: T428 and T440. S441 carries the phosphoserine modification.

It belongs to the intermediate filament family. Homomer assembled from elementary dimers. Identified in complexes that contain VIM, EZR, AHNAK, BFSP1, BFSP2, ANK2, PLEC, PRX and spectrin. Interacts with BCAS3. Interacts with LGSN. Interacts with SYNM. Interacts (via rod region) with PLEC (via CH 1 domain). Interacts with STK33. Interacts with LARP6. Interacts with RAB8B. Interacts with TOR1A; the interaction associates TOR1A with the cytoskeleton. Interacts with TOR1AIP1. Interacts with TOR1AIP1. Interacts with DIAPH1. Interacts with EPPK1; interaction is dependent of higher-order structure of intermediate filament. Interacts with the non-receptor tyrosine kinase SRMS; the interaction leads to phosphorylation of VIM. Interacts with NOD2. Interacts (via head region) with CORO1C. Interacts with HDGF. Interacts with PRKCE (via phorbol-ester/DAG-type 2 domain). Interacts with BFSP2. Interacts with PPL. Interacts with PKP1 and PKP2. Interacts with SCRIB (via PDZ domains); the interaction protects SCRIB from proteasomal degradation and facilitates SCRIB localization to intermediate filaments, the interaction is reduced by cell contact inhibition. Post-translationally, one of the most prominent phosphoproteins in various cells of mesenchymal origin. Phosphorylation is enhanced during cell division, at which time vimentin filaments are significantly reorganized. Phosphorylation by PKN1 inhibits the formation of filaments. Filament disassembly during mitosis is promoted by phosphorylation at Ser-37 as well as by nestin. Phosphorylated at Ser-38 by CDK5 during neutrophil secretion in the cytoplasm. Phosphorylated by STK33. Phosphorylated on tyrosine residues by SRMS. S-nitrosylation is induced by interferon-gamma and oxidatively-modified low-densitity lipoprotein (LDL(ox)) possibly implicating the iNOS-S100A8/9 transnitrosylase complex.

It localises to the cytoplasm. The protein localises to the cytoskeleton. The protein resides in the nucleus matrix. Its subcellular location is the cell membrane. Its function is as follows. Vimentins are class-III intermediate filaments found in various non-epithelial cells, especially mesenchymal cells. Vimentin is attached to the nucleus, endoplasmic reticulum, and mitochondria, either laterally or terminally. Plays a role in cell directional movement, orientation, cell sheet organization and Golgi complex polarization at the cell migration front. Protects SCRIB from proteasomal degradation and facilitates its localization to intermediate filaments in a cell contact-mediated manner. Functionally, involved with LARP6 in the stabilization of type I collagen mRNAs for CO1A1 and CO1A2. This is Vimentin (VIM) from Cricetulus griseus (Chinese hamster).